The sequence spans 276 residues: Dermonecrotic toxin LlSicTox-alphaIV3 (276 aa).

His5 is a catalytic residue. Mg(2+) contacts are provided by Glu25 and Asp27. The active-site Nucleophile is the His41. Intrachain disulfides connect Cys45-Cys51 and Cys47-Cys192. Position 85 (Asp85) interacts with Mg(2+).

This sequence belongs to the arthropod phospholipase D family. Class II subfamily. Mg(2+) is required as a cofactor. As to expression, expressed by the venom gland.

The protein localises to the secreted. It carries out the reaction an N-(acyl)-sphingosylphosphocholine = an N-(acyl)-sphingosyl-1,3-cyclic phosphate + choline. It catalyses the reaction an N-(acyl)-sphingosylphosphoethanolamine = an N-(acyl)-sphingosyl-1,3-cyclic phosphate + ethanolamine. The catalysed reaction is a 1-acyl-sn-glycero-3-phosphocholine = a 1-acyl-sn-glycero-2,3-cyclic phosphate + choline. The enzyme catalyses a 1-acyl-sn-glycero-3-phosphoethanolamine = a 1-acyl-sn-glycero-2,3-cyclic phosphate + ethanolamine. In terms of biological role, dermonecrotic toxins cleave the phosphodiester linkage between the phosphate and headgroup of certain phospholipids (sphingolipid and lysolipid substrates), forming an alcohol (often choline) and a cyclic phosphate. This toxin acts on sphingomyelin (SM). It may also act on ceramide phosphoethanolamine (CPE), lysophosphatidylcholine (LPC) and lysophosphatidylethanolamine (LPE), but not on lysophosphatidylserine (LPS), and lysophosphatidylglycerol (LPG). It acts by transphosphatidylation, releasing exclusively cyclic phosphate products as second products. Induces dermonecrosis, hemolysis, increased vascular permeability, edema, inflammatory response, and platelet aggregation. The polypeptide is Dermonecrotic toxin LlSicTox-alphaIV3 (Loxosceles laeta (South American recluse spider)).